The primary structure comprises 308 residues: Putative protein TIC 214 N-terminal part (308 aa).

The next 6 membrane-spanning stretches (helical) occupy residues 18–38, 64–84, 87–107, 124–144, 172–192, and 215–235; these read IINS…FSIG, FITG…HLAL, PHTI…WNNH, LSIQ…HFIL, VGWL…LSWI, and IFSI…PSPI. Residues 239–249 are compositionally biased toward basic and acidic residues; sequence KLKETSEMEER. The segment at 239–308 is disordered; it reads KLKETSEMEE…RDPSEWKGNI (70 aa). Over residues 250-262 the composition is skewed to acidic residues; that stretch reads GESEEETDVEIET. Basic and acidic residues predominate over residues 264–273; it reads SETKETKQEQ. The span at 275 to 293 shows a compositional bias: acidic residues; sequence GSTEEDPSLCSEEQEDPDK. A compositionally biased stretch (basic and acidic residues) spans 294–308; that stretch reads LDETGRDPSEWKGNI.

Belongs to the TIC214 family. As to quaternary structure, part of the Tic complex.

The protein localises to the plastid. It localises to the chloroplast inner membrane. Its function is as follows. Involved in protein precursor import into chloroplasts. May be part of an intermediate translocation complex acting as a protein-conducting channel at the inner envelope. The polypeptide is Putative protein TIC 214 N-terminal part (Piper cenocladum (Ant piper)).